The following is a 252-amino-acid chain: Neurexophilin-3 (252 aa).

Positions 1–22 are cleaved as a signal peptide; that stretch reads MQLTRCCFVFLVQGSLYLVICG. An II region spans residues 23–75; that stretch reads QDDGPPGSEDPEHDDHEGQPRPRVPRKRGHISPKSRPLANSTLLGLLAPPGEV. The tract at residues 27–59 is disordered; it reads PPGSEDPEHDDHEGQPRPRVPRKRGHISPKSRP. Over residues 45-55 the composition is skewed to basic residues; it reads RVPRKRGHISP. N62, N127, N137, and N143 each carry an N-linked (GlcNAc...) asparagine glycan. The segment at 76–157 is III; sequence WGVLGQPPNR…LVPPSKAVEF (82 aa). The tract at residues 158 to 166 is IV (linker domain); that stretch reads HQEQQIFIE. Residues 167–252 form a v (Cys-rich) region; the sequence is AKASKIFNCR…HSDTPYYPSG (86 aa).

The protein belongs to the neurexophilin family. In terms of processing, may be proteolytically processed at the boundary between the N-terminal non-conserved and the central conserved domain in neuron-like cells. Highest level in brain, present also in lung, kidney and testis.

The protein localises to the secreted. In terms of biological role, may be signaling molecules that resemble neuropeptides. Ligand for alpha-neurexins. This is Neurexophilin-3 (Nxph3) from Mus musculus (Mouse).